The sequence spans 389 residues: Major outer membrane porin (389 aa).

This sequence belongs to the chlamydial porin (CP) (TC 1.B.2) family. As to quaternary structure, part of a disulfide cross-linked outer membrane complex (COMC) composed of the major outer membrane porin (MOMP), the small cysteine-rich protein (OmcA) and the large cysteine-rich periplasmic protein (OmcB).

It localises to the cell outer membrane. Its function is as follows. In elementary bodies (EBs, the infectious stage, which is able to survive outside the host cell) provides the structural integrity of the outer envelope through disulfide cross-links with the small cysteine-rich protein and the large cysteine-rich periplasmic protein. It has been described in publications as the Sarkosyl-insoluble COMC (Chlamydia outer membrane complex), and serves as the functional equivalent of peptidoglycan. Permits diffusion of specific solutes through the outer membrane. This Chlamydia pneumoniae (Chlamydophila pneumoniae) protein is Major outer membrane porin (ompA).